A 132-amino-acid polypeptide reads, in one-letter code: Ribosome-binding factor A (132 aa).

This sequence belongs to the RbfA family. Monomer. Binds 30S ribosomal subunits, but not 50S ribosomal subunits or 70S ribosomes.

It localises to the cytoplasm. Its function is as follows. One of several proteins that assist in the late maturation steps of the functional core of the 30S ribosomal subunit. Associates with free 30S ribosomal subunits (but not with 30S subunits that are part of 70S ribosomes or polysomes). Required for efficient processing of 16S rRNA. May interact with the 5'-terminal helix region of 16S rRNA. The sequence is that of Ribosome-binding factor A from Teredinibacter turnerae (strain ATCC 39867 / T7901).